The following is a 184-amino-acid chain: Spiro-conjugate synthase (184 aa).

Cysteine 57 and cysteine 184 form a disulfide bridge. Residue glutamine 115 participates in (1S,3R,6R,8R,9R,11R,14S,15S,19R,20R)-8-ethyl-9,15-dihydroxy-3,4,6,20-tetramethyl-21,23-dioxo-24-azapentacyclo[20.2.1.0(1,6).0(11,20).0(14,19)]pentacosa-4,12,22(25)-trien-25-olate binding.

Homodimer.

The catalysed reaction is 4-[(1R,2R,4aS,5S,8aR)-2-[(2R,3R,5E,7E)-3-ethyl-2-hydroxy-5,7-dimethylnona-5,7-dien-1-yl]-5-hydroxy-1-methyl-1,2,4a,5,6,7,8,8a-octahydronaphthalene-1-carbonyl]-2-methylidene-5-oxo-2,5-dihydro-1H-pyrrol-3-olate = (1S,3R,6R,8R,9R,11R,14S,15S,19R,20R)-8-ethyl-9,15-dihydroxy-3,4,6,20-tetramethyl-21,23-dioxo-24-azapentacyclo[20.2.1.0(1,6).0(11,20).0(14,19)]pentacosa-4,12,22(25)-trien-25-olate. Its pathway is antibiotic biosynthesis. Involved in the biosynthesis of the spirotetramate antibiotics pyrroindomycins. Catalyzes the intramolecular cyclization forming the spiro-conjugate moiety in pyrroindomycins, via an exo-selective [4+2] cycloaddition reaction. This Streptomyces rugosporus protein is Spiro-conjugate synthase.